Here is a 469-residue protein sequence, read N- to C-terminus: ATP synthase subunit beta (469 aa).

156–163 (GGAGVGKT) is an ATP binding site.

It belongs to the ATPase alpha/beta chains family. In terms of assembly, F-type ATPases have 2 components, CF(1) - the catalytic core - and CF(0) - the membrane proton channel. CF(1) has five subunits: alpha(3), beta(3), gamma(1), delta(1), epsilon(1). CF(0) has three main subunits: a(1), b(2) and c(9-12). The alpha and beta chains form an alternating ring which encloses part of the gamma chain. CF(1) is attached to CF(0) by a central stalk formed by the gamma and epsilon chains, while a peripheral stalk is formed by the delta and b chains.

The protein resides in the cell membrane. The enzyme catalyses ATP + H2O + 4 H(+)(in) = ADP + phosphate + 5 H(+)(out). Functionally, produces ATP from ADP in the presence of a proton gradient across the membrane. The catalytic sites are hosted primarily by the beta subunits. This is ATP synthase subunit beta from Lactococcus lactis subsp. cremoris (strain SK11).